Here is a 151-residue protein sequence, read N- to C-terminus: Linear element protein Mug20 (151 aa).

A coiled-coil region spans residues 56 to 140 (EEKLRALDKL…CAMEKLKMIE (85 aa)).

As to quaternary structure, component of linear elements (LinEs), which are similar to synaptonemal complexes, at least composed of rec27, rec25, rec10 and mug20. Interacts with rec10.

Its subcellular location is the cytoplasm. The protein localises to the nucleus. It localises to the chromosome. In terms of biological role, during meiotic DNA recombination, binds to and may help activate DNA double-strand break (DSB) hotspot sites. This chain is Linear element protein Mug20, found in Schizosaccharomyces pombe (strain 972 / ATCC 24843) (Fission yeast).